Reading from the N-terminus, the 279-residue chain is HTH-type transcriptional activator RhaS (279 aa).

Positions 175 to 273 (QALLGWLQNN…SQAPKSLRHQ (99 aa)) constitute an HTH araC/xylS-type domain. 2 DNA-binding regions (H-T-H motif) span residues 192–213 (GSLA…KQHT) and 240–263 (ITTI…RKAF).

As to quaternary structure, binds DNA as a dimer.

It localises to the cytoplasm. Functionally, activates expression of the rhaBAD and rhaT operons. This Pectobacterium carotovorum subsp. carotovorum (strain PC1) protein is HTH-type transcriptional activator RhaS.